A 179-amino-acid chain; its full sequence is Large ribosomal subunit protein uL6 (179 aa).

The protein belongs to the universal ribosomal protein uL6 family. As to quaternary structure, part of the 50S ribosomal subunit.

Its function is as follows. This protein binds to the 23S rRNA, and is important in its secondary structure. It is located near the subunit interface in the base of the L7/L12 stalk, and near the tRNA binding site of the peptidyltransferase center. The protein is Large ribosomal subunit protein uL6 of Spiroplasma citri.